Here is a 93-residue protein sequence, read N- to C-terminus: Guanine nucleotide-binding protein subunit gamma 1 (93 aa).

Residues Thr12–Leu52 adopt a coiled-coil conformation. In terms of domain architecture, G protein gamma spans Ala20–Leu93. A lipid anchor (S-palmitoyl cysteine) is attached at Cys88. The residue at position 90 (Cys90) is a Cysteine methyl ester. A lipid anchor (S-farnesyl cysteine) is attached at Cys90. A propeptide spans Trp91–Leu93 (removed in mature form).

In terms of assembly, g proteins are composed of 3 units, alpha, beta and gamma. Interacts with the beta subunit RGB1.

Its subcellular location is the cell membrane. Guanine nucleotide-binding proteins (G proteins) are involved as modulators or transducers in various transmembrane signaling systems. The chain is Guanine nucleotide-binding protein subunit gamma 1 from Oryza sativa subsp. indica (Rice).